The primary structure comprises 525 residues: Glutamate--cysteine ligase (525 aa).

The protein belongs to the glutamate--cysteine ligase type 1 family. Type 1 subfamily.

It catalyses the reaction L-cysteine + L-glutamate + ATP = gamma-L-glutamyl-L-cysteine + ADP + phosphate + H(+). The protein operates within sulfur metabolism; glutathione biosynthesis; glutathione from L-cysteine and L-glutamate: step 1/2. The chain is Glutamate--cysteine ligase from Pseudomonas putida (strain W619).